A 785-amino-acid chain; its full sequence is Cadherin-7 (785 aa).

The N-terminal stretch at 1-27 is a signal peptide; sequence MKLGKVELCRFLQLIALFLCFSGMNQA. A propeptide spanning residues 28 to 47 is cleaved from the precursor; it reads ELPRSRSKPYFQLGRSRTKR. The Extracellular portion of the chain corresponds to 28–607; that stretch reads ELPRSRSKPY…AYILPAGLST (580 aa). Cadherin domains lie at 49–153, 154–262, 263–377, 378–482, and 482–599; these read WVWN…EPKF, LDGP…PPRF, PRRS…PPVF, SSPL…APEF, and FAMD…AEAY. 2 N-linked (GlcNAc...) asparagine glycosylation sites follow: Asn-449 and Asn-530. Residues 608–628 traverse the membrane as a helical segment; sequence GALIAILACVLTLLVLILLIV. Topologically, residues 629 to 785 are cytoplasmic; the sequence is TMKRRKKEPL…YGNGQESLYS (157 aa).

Its subcellular location is the cell membrane. Its function is as follows. Cadherins are calcium-dependent cell adhesion proteins. They preferentially interact with themselves in a homophilic manner in connecting cells; cadherins may thus contribute to the sorting of heterogeneous cell types. The sequence is that of Cadherin-7 (Cdh7) from Rattus norvegicus (Rat).